The following is a 243-amino-acid chain: Proteasome subunit beta (243 aa).

The segment at 1–46 (MFNPNNGSEFARNRARLDDTPNPYEPEVGSLPEGDRSQAGSDTVNK) is disordered. Residues 1–48 (MFNPNNGSEFARNRARLDDTPNPYEPEVGSLPEGDRSQAGSDTVNKTG) constitute a propeptide, removed in mature form; by autocatalysis. The active-site Nucleophile is the Thr-49.

The protein belongs to the peptidase T1B family. The 20S proteasome core is composed of 14 alpha and 14 beta subunits that assemble into four stacked heptameric rings, resulting in a barrel-shaped structure. The two inner rings, each composed of seven catalytic beta subunits, are sandwiched by two outer rings, each composed of seven alpha subunits. The catalytic chamber with the active sites is on the inside of the barrel. Has a gated structure, the ends of the cylinder being occluded by the N-termini of the alpha-subunits. Is capped at one or both ends by the proteasome regulatory ATPase, PAN.

It is found in the cytoplasm. It carries out the reaction Cleavage of peptide bonds with very broad specificity.. With respect to regulation, the formation of the proteasomal ATPase PAN-20S proteasome complex, via the docking of the C-termini of PAN into the intersubunit pockets in the alpha-rings, triggers opening of the gate for substrate entry. Interconversion between the open-gate and close-gate conformations leads to a dynamic regulation of the 20S proteasome proteolysis activity. Its function is as follows. Component of the proteasome core, a large protease complex with broad specificity involved in protein degradation. The sequence is that of Proteasome subunit beta from Halobacterium salinarum (strain ATCC 29341 / DSM 671 / R1).